A 576-amino-acid polypeptide reads, in one-letter code: Arginine--tRNA ligase (576 aa).

Residues alanine 132 to histidine 142 carry the 'HIGH' region motif.

Belongs to the class-I aminoacyl-tRNA synthetase family. In terms of assembly, monomer.

It localises to the cytoplasm. The enzyme catalyses tRNA(Arg) + L-arginine + ATP = L-arginyl-tRNA(Arg) + AMP + diphosphate. The sequence is that of Arginine--tRNA ligase from Ehrlichia ruminantium (strain Welgevonden).